Consider the following 111-residue polypeptide: Short neuropeptide F (111 aa).

Residues 1–24 (MSAMYAKRCAALVLLVVTVGLVNA) form the signal peptide. A propeptide spanning residues 25–76 (TENYMDYGEEMAEKTPAENIHELYRLLLQRNTLDNAGFGGIPLEHLMIRKSQ) is cleaved from the precursor. F85 is subject to Phenylalanine amide. A propeptide spanning residues 88–111 (SGPHVSARALPRPMGAVAGYDDNN) is cleaved from the precursor.

In terms of tissue distribution, expressed throughout the central nervous system (at protein level).

It is found in the secreted. Functionally, plays a role in controlling food intake and regulating body size. The polypeptide is Short neuropeptide F (Camponotus floridanus (Florida carpenter ant)).